The primary structure comprises 132 residues: Transcription antitermination protein NusB (132 aa).

Belongs to the NusB family.

Its function is as follows. Involved in transcription antitermination. Required for transcription of ribosomal RNA (rRNA) genes. Binds specifically to the boxA antiterminator sequence of the ribosomal RNA (rrn) operons. The sequence is that of Transcription antitermination protein NusB from Campylobacter jejuni subsp. jejuni serotype O:2 (strain ATCC 700819 / NCTC 11168).